Here is a 214-residue protein sequence, read N- to C-terminus: Small ribosomal subunit protein uS5 (214 aa).

Residues 54–117 (LKYEVMDIKI…KNAKMNIIPV (64 aa)) form the S5 DRBM domain.

The protein belongs to the universal ribosomal protein uS5 family. In terms of assembly, part of the 30S ribosomal subunit. Contacts protein S4.

With S4 and S12 plays an important role in translational accuracy. This chain is Small ribosomal subunit protein uS5, found in Sulfurisphaera tokodaii (strain DSM 16993 / JCM 10545 / NBRC 100140 / 7) (Sulfolobus tokodaii).